A 329-amino-acid chain; its full sequence is Phosphate acyltransferase (329 aa).

This sequence belongs to the PlsX family. Homodimer. Probably interacts with PlsY.

It is found in the cytoplasm. It catalyses the reaction a fatty acyl-[ACP] + phosphate = an acyl phosphate + holo-[ACP]. The protein operates within lipid metabolism; phospholipid metabolism. Its function is as follows. Catalyzes the reversible formation of acyl-phosphate (acyl-PO(4)) from acyl-[acyl-carrier-protein] (acyl-ACP). This enzyme utilizes acyl-ACP as fatty acyl donor, but not acyl-CoA. In Exiguobacterium sp. (strain ATCC BAA-1283 / AT1b), this protein is Phosphate acyltransferase.